A 350-amino-acid chain; its full sequence is Biotin synthase (350 aa).

The span at 1–13 shows a compositional bias: polar residues; it reads MVTQAATRPSNDA. Residues 1-20 are disordered; that stretch reads MVTQAATRPSNDAGQDGVTE. The region spanning 71 to 296 is the Radical SAM core domain; sequence PEVEVEGIIS…RTMLRFAGGR (226 aa). [4Fe-4S] cluster is bound by residues Cys-86, Cys-90, and Cys-93. Positions 129, 162, 221, and 291 each coordinate [2Fe-2S] cluster.

This sequence belongs to the radical SAM superfamily. Biotin synthase family. As to quaternary structure, homodimer. Requires [4Fe-4S] cluster as cofactor. The cofactor is [2Fe-2S] cluster.

The catalysed reaction is (4R,5S)-dethiobiotin + (sulfur carrier)-SH + 2 reduced [2Fe-2S]-[ferredoxin] + 2 S-adenosyl-L-methionine = (sulfur carrier)-H + biotin + 2 5'-deoxyadenosine + 2 L-methionine + 2 oxidized [2Fe-2S]-[ferredoxin]. It functions in the pathway cofactor biosynthesis; biotin biosynthesis; biotin from 7,8-diaminononanoate: step 2/2. Functionally, catalyzes the conversion of dethiobiotin (DTB) to biotin by the insertion of a sulfur atom into dethiobiotin via a radical-based mechanism. The polypeptide is Biotin synthase (Mycobacterium ulcerans (strain Agy99)).